The following is a 299-amino-acid chain: MTEFRSGFVCFVGRPNTGKSTLTNALVGQKVAITSNRPQTTRHTIRGIVHREDFQIILVDTPGLHRPRTLLGQRLNDLVKDTYSEVDVIGMCIPADEAIGPGDRWIYQQIRAVAPRTTLIGIVTKIDKVPKDRVAAQLLAVSELMGPDAEIVPVSATSGEQLDVLTNVLVSQLPPGPAYYPDGELTDEPEEVLMAELIREAALEGVRDELPHSLAVVIDEVSQREDRDDLIDVHAILYVERDSQKGIVIGKGGARLREVGTAARKQIEKLLGTKVYLDLRVKIAKNWQRDPKQLGKLGF.

In terms of domain architecture, Era-type G spans 5–175 (RSGFVCFVGR…TNVLVSQLPP (171 aa)). The segment at 13–20 (GRPNTGKS) is G1. GTP is bound at residue 13 to 20 (GRPNTGKS). The segment at 39-43 (QTTRH) is G2. Residues 60–63 (DTPG) are G3. GTP is bound by residues 60–64 (DTPGL) and 124–127 (TKID). The interval 124–127 (TKID) is G4. The G5 stretch occupies residues 154 to 156 (VSA). The region spanning 206–285 (VRDELPHSLA…YLDLRVKIAK (80 aa)) is the KH type-2 domain.

This sequence belongs to the TRAFAC class TrmE-Era-EngA-EngB-Septin-like GTPase superfamily. Era GTPase family. As to quaternary structure, monomer. Stays in the monomer conformation, irrespective of the presence of GTP.

The protein resides in the cell envelope. It is found in the secreted. It localises to the cell wall. Co-purified with RNA upon overexpression in E.coli, but RNAs do not appear to influence the GTPase activity. In terms of biological role, exhibits GTPase activity. Binds RNA but is probably not involved in ribosome assembly in mycobacteria. Cannot use ATP. This Mycolicibacterium smegmatis (strain ATCC 700084 / mc(2)155) (Mycobacterium smegmatis) protein is GTPase Era.